Here is a 217-residue protein sequence, read N- to C-terminus: Nucleoside diphosphate-linked moiety X motif 6 (217 aa).

Residues 42 to 177 enclose the Nudix hydrolase domain; sequence THQVGVAGAV…VAKLLLYGYN (136 aa). A Nudix box motif is present at residues 77–98; the sequence is GLSDQGEDIGATAVREVLEETG.

Belongs to the Nudix hydrolase family. In terms of tissue distribution, detected in liver (at protein level).

It localises to the cytoplasm. It is found in the nucleus. The protein resides in the mitochondrion. In terms of biological role, may contribute to the regulation of cell proliferation. The chain is Nucleoside diphosphate-linked moiety X motif 6 (nudt6) from Xenopus laevis (African clawed frog).